A 116-amino-acid chain; its full sequence is Large ribosomal subunit protein bL17 (116 aa).

Belongs to the bacterial ribosomal protein bL17 family. Part of the 50S ribosomal subunit. Contacts protein L32.

The polypeptide is Large ribosomal subunit protein bL17 (Prochlorococcus marinus (strain MIT 9303)).